A 157-amino-acid polypeptide reads, in one-letter code: Transcription elongation factor GreA (157 aa).

A coiled-coil region spans residues 12–74 (LKKLEEELEY…TLEAMLKNAK (63 aa)).

The protein belongs to the GreA/GreB family.

Necessary for efficient RNA polymerase transcription elongation past template-encoded arresting sites. The arresting sites in DNA have the property of trapping a certain fraction of elongating RNA polymerases that pass through, resulting in locked ternary complexes. Cleavage of the nascent transcript by cleavage factors such as GreA or GreB allows the resumption of elongation from the new 3'terminus. GreA releases sequences of 2 to 3 nucleotides. The protein is Transcription elongation factor GreA of Thermoanaerobacter pseudethanolicus (strain ATCC 33223 / 39E) (Clostridium thermohydrosulfuricum).